The following is a 377-amino-acid chain: Protein MULTIPOLAR SPINDLE 1 (377 aa).

The short motif at 117-124 is the Nuclear localization signal element; sequence LRRRFLRL.

As to expression, expressed in roots, stems, leaves, inflorescences and seedlings. Strongly expressed in meiocytes.

Its subcellular location is the nucleus. It localises to the cytoplasm. It is found in the cytoskeleton. The protein localises to the spindle. Functionally, involved in meiotic spindle organization in meiocytes thus regulating chromosome segregation. Required for formation of meiotic DNA double-strand breaks (DSBs) during early recombination processes. This chain is Protein MULTIPOLAR SPINDLE 1, found in Arabidopsis thaliana (Mouse-ear cress).